The following is a 90-amino-acid chain: MHLSLARSAGLMWLLLFAVGNFVGVQPGQITRDVDNGQLADNRRNLQSLRKPMTLFKSLNKRVSCGEYCGDYGDCPSSCPTCTSNLLKCM.

Positions 1 to 27 are cleaved as a signal peptide; sequence MHLSLARSAGLMWLLLFAVGNFVGVQP. The propeptide occupies 28-62; sequence GQITRDVDNGQLADNRRNLQSLRKPMTLFKSLNKR. At Glu67 the chain carries 4-carboxyglutamate. 4-hydroxyproline is present on residues Pro76 and Pro80.

Expressed by the venom duct.

It localises to the secreted. In Conus bayani (Bayan's cone), this protein is Conotoxin ba9a.